The sequence spans 307 residues: Thioredoxin reductase (307 aa).

34–41 is a binding site for FAD; sequence ESKAHGGQ. C134 and C137 are oxidised to a cystine. Residue 275–284 coordinates FAD; that stretch reads DVRAKSFRQV.

Belongs to the class-II pyridine nucleotide-disulfide oxidoreductase family. As to quaternary structure, homodimer. Requires FAD as cofactor.

Its subcellular location is the cytoplasm. It catalyses the reaction [thioredoxin]-dithiol + NADP(+) = [thioredoxin]-disulfide + NADPH + H(+). The chain is Thioredoxin reductase (trxB) from Treponema pallidum (strain Nichols).